The following is a 782-amino-acid chain: Probable cyclic di-GMP phosphodiesterase PdeI (782 aa).

The next 2 helical transmembrane spans lie at 12–32 (LIILFLLAALSFIGLFFIINY) and 286–306 (LFYLPFAFIIIVLLVVYLMTT). The region spanning 527-781 (NIWIARNIRH…AWDKSGKLVK (255 aa)) is the EAL domain.

The protein resides in the cell membrane. The enzyme catalyses 3',3'-c-di-GMP + H2O = 5'-phosphoguanylyl(3'-&gt;5')guanosine + H(+). In terms of biological role, phosphodiesterase (PDE) that catalyzes the hydrolysis of cyclic-di-GMP (c-di-GMP) to 5'-pGpG. Overexpression reduces biofilm formation. Cyclic-di-GMP is a second messenger which controls cell surface-associated traits in bacteria. The polypeptide is Probable cyclic di-GMP phosphodiesterase PdeI (Escherichia coli (strain K12)).